The chain runs to 356 residues: Protein RecA (356 aa).

67 to 74 (GPESSGKT) contributes to the ATP binding site.

It belongs to the RecA family.

It is found in the cytoplasm. In terms of biological role, can catalyze the hydrolysis of ATP in the presence of single-stranded DNA, the ATP-dependent uptake of single-stranded DNA by duplex DNA, and the ATP-dependent hybridization of homologous single-stranded DNAs. It interacts with LexA causing its activation and leading to its autocatalytic cleavage. This Yersinia pestis (strain Pestoides F) protein is Protein RecA.